The primary structure comprises 720 residues: Photosystem I P700 chlorophyll a apoprotein A1 (720 aa).

Helical transmembrane passes span 62-85 (IFSAHFGQLAIIFIWLSGMYFHGA), 148-171 (LYCTAIGGLIFAALMLFAGWFHYH), 186-210 (LNHHLAGLLGLGSLSWAGHQVHVSL), 282-300 (IVHHHLAIAVIFLIAGHMY), 337-360 (WHAQLALNLAILGSLTIVVAHHMY), 376-402 (LSLFTHHMWIGGFVIIGAAAHAAIFLV), 424-446 (AIISHLNWTCIFLGFHSFGLYIH), and 522-540 (FLVHHIHAFTIHVTVLILL). Residues cysteine 564 and cysteine 573 each contribute to the [4Fe-4S] cluster site. 2 consecutive transmembrane segments (helical) span residues 580 to 601 (HVFLGLFWMYNAISVVIFHFSW) and 655 to 677 (LSAYGLFFLGAHFVWAFSLMFLF). Histidine 666 serves as a coordination point for chlorophyll a'. Chlorophyll a is bound by residues methionine 674 and tyrosine 682. Tryptophan 683 is a binding site for phylloquinone. The chain crosses the membrane as a helical span at residues 715–720 (AVGVAH).

The protein belongs to the PsaA/PsaB family. As to quaternary structure, the PsaA/B heterodimer binds the P700 chlorophyll special pair and subsequent electron acceptors. PSI consists of a core antenna complex that captures photons, and an electron transfer chain that converts photonic excitation into a charge separation. The eukaryotic PSI reaction center is composed of at least 11 subunits. The cofactor is P700 is a chlorophyll a/chlorophyll a' dimer, A0 is one or more chlorophyll a, A1 is one or both phylloquinones and FX is a shared 4Fe-4S iron-sulfur center..

The protein localises to the plastid. Its subcellular location is the chloroplast thylakoid membrane. It catalyses the reaction reduced [plastocyanin] + hnu + oxidized [2Fe-2S]-[ferredoxin] = oxidized [plastocyanin] + reduced [2Fe-2S]-[ferredoxin]. Functionally, psaA and PsaB bind P700, the primary electron donor of photosystem I (PSI), as well as the electron acceptors A0, A1 and FX. PSI is a plastocyanin-ferredoxin oxidoreductase, converting photonic excitation into a charge separation, which transfers an electron from the donor P700 chlorophyll pair to the spectroscopically characterized acceptors A0, A1, FX, FA and FB in turn. Oxidized P700 is reduced on the lumenal side of the thylakoid membrane by plastocyanin. In Ephedra tweediana (Vining horsetail), this protein is Photosystem I P700 chlorophyll a apoprotein A1.